We begin with the raw amino-acid sequence, 355 residues long: tRNA uridine(34) hydroxylase (355 aa).

The 95-residue stretch at 146-240 folds into the Rhodanese domain; the sequence is DDPDTVFVDM…YARQAKAQGL (95 aa). The active-site Cysteine persulfide intermediate is C200.

The protein belongs to the TrhO family.

The catalysed reaction is uridine(34) in tRNA + AH2 + O2 = 5-hydroxyuridine(34) in tRNA + A + H2O. Its function is as follows. Catalyzes oxygen-dependent 5-hydroxyuridine (ho5U) modification at position 34 in tRNAs. The chain is tRNA uridine(34) hydroxylase from Pectobacterium carotovorum subsp. carotovorum (strain PC1).